The sequence spans 425 residues: Gamma-glutamyl phosphate reductase (425 aa).

This sequence belongs to the gamma-glutamyl phosphate reductase family.

Its subcellular location is the cytoplasm. It carries out the reaction L-glutamate 5-semialdehyde + phosphate + NADP(+) = L-glutamyl 5-phosphate + NADPH + H(+). It functions in the pathway amino-acid biosynthesis; L-proline biosynthesis; L-glutamate 5-semialdehyde from L-glutamate: step 2/2. Its function is as follows. Catalyzes the NADPH-dependent reduction of L-glutamate 5-phosphate into L-glutamate 5-semialdehyde and phosphate. The product spontaneously undergoes cyclization to form 1-pyrroline-5-carboxylate. The polypeptide is Gamma-glutamyl phosphate reductase (Xylella fastidiosa (strain M23)).